The chain runs to 38 residues: Large ribosomal subunit protein bL36 (38 aa).

The protein belongs to the bacterial ribosomal protein bL36 family.

In Pelodictyon phaeoclathratiforme (strain DSM 5477 / BU-1), this protein is Large ribosomal subunit protein bL36.